The primary structure comprises 249 residues: Ribonuclease 3 (249 aa).

Residues 20–149 (FKKFQERISV…FIGALYLDQG (130 aa)) enclose the RNase III domain. Glutamate 62 provides a ligand contact to Mg(2+). Residue aspartate 66 is part of the active site. Mg(2+) contacts are provided by aspartate 135 and glutamate 138. Glutamate 138 is an active-site residue. A DRBM domain is found at 175-244 (DFKSQLQEFV…AQEALAKLQK (70 aa)). The disordered stretch occupies residues 225–249 (RSKKEAEQHAAQEALAKLQKHHMKQ).

The protein belongs to the ribonuclease III family. In terms of assembly, homodimer. Mg(2+) is required as a cofactor.

It is found in the cytoplasm. The enzyme catalyses Endonucleolytic cleavage to 5'-phosphomonoester.. Digests double-stranded RNA. Involved in the processing of primary rRNA transcript to yield the immediate precursors to the large and small rRNAs (23S and 16S). Processes some mRNAs, and tRNAs when they are encoded in the rRNA operon. Processes pre-crRNA and tracrRNA of type II CRISPR loci if present in the organism. The polypeptide is Ribonuclease 3 (Bacillus licheniformis (strain ATCC 14580 / DSM 13 / JCM 2505 / CCUG 7422 / NBRC 12200 / NCIMB 9375 / NCTC 10341 / NRRL NRS-1264 / Gibson 46)).